A 143-amino-acid chain; its full sequence is Large ribosomal subunit protein uL11 (143 aa).

The protein belongs to the universal ribosomal protein uL11 family. In terms of assembly, part of the ribosomal stalk of the 50S ribosomal subunit. Interacts with L10 and the large rRNA to form the base of the stalk. L10 forms an elongated spine to which L12 dimers bind in a sequential fashion forming a multimeric L10(L12)X complex. One or more lysine residues are methylated.

Forms part of the ribosomal stalk which helps the ribosome interact with GTP-bound translation factors. This chain is Large ribosomal subunit protein uL11, found in Psychrobacter sp. (strain PRwf-1).